Consider the following 911-residue polypeptide: Nitrate reductase [NADH], clone PBNBR1412 (911 aa).

A disordered region spans residues 53–72; sequence NDAVDDSYDSSDDEDESHNR. Residues 56-68 show a composition bias toward acidic residues; sequence VDDSYDSSDDEDE. Cys-191 contributes to the Mo-molybdopterin binding site. Positions 539–614 constitute a Cytochrome b5 heme-binding domain; that stretch reads AKMYSMSEVR…LEDYRIGELI (76 aa). Positions 574 and 597 each coordinate heme. The FAD-binding FR-type domain maps to 654 to 766; it reads REKVPVTLIE…KGPLGHIEYL (113 aa). FAD contacts are provided by residues 706 to 709, 723 to 727, Phe-728, Phe-735, 740 to 742, and Thr-793; these read RAYT, VVKVY, and LMS.

Belongs to the nitrate reductase family. Homodimer. The cofactor is FAD. Heme serves as cofactor. It depends on Mo-molybdopterin as a cofactor.

The catalysed reaction is nitrite + NAD(+) + H2O = nitrate + NADH + H(+). Functionally, nitrate reductase is a key enzyme involved in the first step of nitrate assimilation in plants, fungi and bacteria. The chain is Nitrate reductase [NADH], clone PBNBR1412 (NIA2) from Brassica napus (Rape).